The primary structure comprises 75 residues: Tautomerase PptA (75 aa).

Proline 2 functions as the Proton acceptor; via imino nitrogen in the catalytic mechanism.

It belongs to the 4-oxalocrotonate tautomerase family. PptA subfamily. As to quaternary structure, homodimer.

Its subcellular location is the cytoplasm. This chain is Tautomerase PptA, found in Escherichia coli O139:H28 (strain E24377A / ETEC).